Here is a 674-residue protein sequence, read N- to C-terminus: Dymeclin (674 aa).

G2 carries N-myristoyl glycine lipidation.

This sequence belongs to the dymeclin family. In terms of assembly, interacts with GOLM1 and PPIB. In terms of processing, myristoylated in vitro; myristoylation is not essential for protein targeting to Golgi compartment.

Its subcellular location is the cytoplasm. It localises to the golgi apparatus. The protein localises to the membrane. Necessary for correct organization of Golgi apparatus. Involved in bone development. In Rattus norvegicus (Rat), this protein is Dymeclin (Dym).